Here is a 1025-residue protein sequence, read N- to C-terminus: Multidrug resistance protein MdtC (1025 aa).

12 consecutive transmembrane segments (helical) span residues 3–23, 333–353, 360–380, 387–407, 431–451, 463–483, 528–548, 853–873, 875–895, 897–917, 953–973, and 984–1004; these read FFAL…AITL, EVEQ…FLFL, LIPA…MYLC, LSLM…IVVL, VGFT…PLLL, FAVT…TLTP, IVGL…ITIP, VILI…LYES, VHPL…LLAL, LFDA…IGIV, PIMM…ISSG, and ITIV…TPVV.

The protein belongs to the resistance-nodulation-cell division (RND) (TC 2.A.6) family. MdtC subfamily. In terms of assembly, part of a tripartite efflux system composed of MdtA, MdtB and MdtC. MdtC forms a heteromultimer with MdtB.

The protein localises to the cell inner membrane. The protein is Multidrug resistance protein MdtC of Enterobacter sp. (strain 638).